The primary structure comprises 495 residues: Glycerol kinase (495 aa).

Thr-13 is a binding site for ADP. The ATP site is built by Thr-13, Thr-14, and Ser-15. A sn-glycerol 3-phosphate-binding site is contributed by Thr-13. Arg-17 provides a ligand contact to ADP. Arg-83, Glu-84, Tyr-135, and Asp-244 together coordinate sn-glycerol 3-phosphate. The glycerol site is built by Arg-83, Glu-84, Tyr-135, Asp-244, and Gln-245. Residues Thr-266 and Gly-309 each coordinate ADP. Thr-266, Gly-309, Gln-313, and Gly-410 together coordinate ATP. The ADP site is built by Gly-410 and Asn-414.

This sequence belongs to the FGGY kinase family.

It carries out the reaction glycerol + ATP = sn-glycerol 3-phosphate + ADP + H(+). It functions in the pathway polyol metabolism; glycerol degradation via glycerol kinase pathway; sn-glycerol 3-phosphate from glycerol: step 1/1. With respect to regulation, inhibited by fructose 1,6-bisphosphate (FBP). In terms of biological role, key enzyme in the regulation of glycerol uptake and metabolism. Catalyzes the phosphorylation of glycerol to yield sn-glycerol 3-phosphate. The protein is Glycerol kinase of Shewanella woodyi (strain ATCC 51908 / MS32).